The sequence spans 484 residues: tRNA-2-methylthio-N(6)-dimethylallyladenosine synthase (484 aa).

The region spanning 36–153 is the MTTase N-terminal domain; that stretch reads GKLYIKTHGC…LPELIRARRE (118 aa). Residues C45, C82, C116, C190, C194, and C197 each contribute to the [4Fe-4S] cluster site. The Radical SAM core domain maps to 176 to 415; that stretch reads RAEGPSAFVS…HISAHAASIS (240 aa). A TRAM domain is found at 416–479; it reads QSMVGSVQRV…SNSLRGRIQL (64 aa). Residues 428–450 form a disordered region; that stretch reads EGPSRRDPNELTGKSENMRPVNF.

This sequence belongs to the methylthiotransferase family. MiaB subfamily. In terms of assembly, monomer. It depends on [4Fe-4S] cluster as a cofactor.

It is found in the cytoplasm. It carries out the reaction N(6)-dimethylallyladenosine(37) in tRNA + (sulfur carrier)-SH + AH2 + 2 S-adenosyl-L-methionine = 2-methylsulfanyl-N(6)-dimethylallyladenosine(37) in tRNA + (sulfur carrier)-H + 5'-deoxyadenosine + L-methionine + A + S-adenosyl-L-homocysteine + 2 H(+). Its function is as follows. Catalyzes the methylthiolation of N6-(dimethylallyl)adenosine (i(6)A), leading to the formation of 2-methylthio-N6-(dimethylallyl)adenosine (ms(2)i(6)A) at position 37 in tRNAs that read codons beginning with uridine. This chain is tRNA-2-methylthio-N(6)-dimethylallyladenosine synthase, found in Xanthomonas oryzae pv. oryzae (strain MAFF 311018).